A 326-amino-acid polypeptide reads, in one-letter code: Microtubule-associated protein RP/EB family member 2 (326 aa).

Residue Ser9 is modified to Phosphoserine. The 103-residue stretch at 56-158 (TMSRHDIIAW…FIQWFKKFYD (103 aa)) folds into the Calponin-homology (CH) domain. Position 166 is a phosphotyrosine (Tyr166). 2 disordered regions span residues 170 to 239 (EARQ…DKDL) and 297 to 326 (YASD…QEEY). The interval 186-326 (QIFNLPKKSH…DQQPQQQEEY (141 aa)) is DCTN1-binding. Residues 199–233 (SPTAGAAKSSPAAKPGSTPSRPSSAKRASSSGSAS) are compositionally biased toward low complexity. Residues Ser218 and Ser235 each carry the phosphoserine modification. The EB1 C-terminal domain occupies 235–305 (SDKDLETQVI…LYASDEQEGQ (71 aa)). Positions 258-301 (EGVEKERDFYFGKLREIELLCQEHGQENDDLVQRLMEVLYASDE) are APC-binding. A compositionally biased stretch (acidic residues) spans 300–312 (DEQEGQTEEPEVE). Over residues 317–326 (DQQPQQQEEY) the composition is skewed to low complexity.

Belongs to the MAPRE family. In terms of assembly, interacts with DCTN1. Interacts with APC (via C-terminal). Interacts with monomeric and polymerized tubulin. Interacts with SLAIN1. Interacts (via the N-terminal region) with BAG1. Interacts with ASB14. Interacts with HAX1; this interaction is essential for epidermal cell migration. In terms of processing, phosphorylated at Ser-235 by CK2 leading to enhanced cell adhesion. Phosphorylated by CDK1 and AURKB during mitosis reduces the binding affinity of MAPRE2 for microtubules. Ubiquitinated in an ASB14-dependent manner; leading to proteasomal degradation.

The protein localises to the cytoplasm. The protein resides in the cytoskeleton. Adapter protein that is involved in microtubule polymerization, and spindle function by stabilizing microtubules and anchoring them at centrosomes. Therefore, ensures mitotic progression and genome stability. Acts as a central regulator of microtubule reorganization in apico-basal epithelial differentiation. Plays a role during oocyte meiosis by regulating microtubule dynamics. Participates in neurite growth by interacting with plexin B3/PLXNB3 and microtubule reorganization during apico-basal epithelial differentiation. Also plays an essential role for cell migration and focal adhesion dynamics. Mechanistically, recruits HAX1 to microtubules in order to regulate focal adhesion dynamics. The chain is Microtubule-associated protein RP/EB family member 2 (Mapre2) from Rattus norvegicus (Rat).